The following is a 940-amino-acid chain: MMNDYKNTLNLPKTKFPMKANLLISELKILECWKKNNLYSIIRENKKGKKTFFLHDGPPYANGDIHIGHAVNKILKDIIIKFKSLFGFDAPYMPGWDCHGLPIELQVEKKINQNINKINHKIFREKCRNYALDQVNKQKKEFIRLGVIGDWNNPYLTMDFHTEANILRTFKNLIKKKYLYRGIKPINWCIDCKSSLSDSEIDYNIKESNSIDVSFSACDNNKILKIFNSEKKFDKIKAIIWTTTPWTIIANRAISVNPNFIYLLVKCNKEIFIIAESLLDKTLARLNIKKSKILGSVYGKKLKFLYFKHPLNKIHVPMILNEYVDFKSGSGIVHVAPNYGEEDYIIGKKYKLNMYDPIDSNGNYLPGTFPGLDGLNIFKSEEVVLNLLKNNHSLYSKKIINHSYPHCWRHKSPTFFRATNQWFFNIDNNNLRNKTISEIKKILWIPKWGMNQIIDLLSNRPDWCISRQRVWGVPIAVFINKKNKEIHPNTVELIEKVSKKIEKKGVQAWWDINKSEILDKDSDKYKKVLDTLDVWFDSGSTYYSILIKKWNSLNKNKVDLYLEGSDQYRGWFMSSIILSIAITGGIPCKKILAHGFVVDSNGKKMSKSIGNVISPKDIINEFGADILRLWVASSDYKSDISISKEILLRTVDIYRRIRNTSRFLLSNLNDFNPEFNSINLENMLSIDQWAIIKTNNRQKKIKNAYEEYNFHKVVSNIVDFCSLDMGSFYLDIIKDRQYTNYIDSLARRSCQTAILYIIECLVRWIMPILSFTSHEIWKYIPGKREKYVFLSEWVKEIPCENINSYISKSLWKILIKIKNEINKIIEIKKLEDKIKSSLELKITLYAESFIFEELILLKKELNFAFLVSYVSIKKYENSKENAFKSKSIKNLKILAEKFDGKKCLRCWNYTNDIVNDVKYNKICNRCINNINGVEEKRKYF.

Residues 59–69 (PYANGDIHIGH) carry the 'HIGH' region motif. Glu563 contributes to the L-isoleucyl-5'-AMP binding site. The short motif at 604 to 608 (KMSKS) is the 'KMSKS' region element. Residue Lys607 coordinates ATP. Positions 903, 906, 923, and 926 each coordinate Zn(2+).

This sequence belongs to the class-I aminoacyl-tRNA synthetase family. IleS type 1 subfamily. As to quaternary structure, monomer. The cofactor is Zn(2+).

It is found in the cytoplasm. The enzyme catalyses tRNA(Ile) + L-isoleucine + ATP = L-isoleucyl-tRNA(Ile) + AMP + diphosphate. Catalyzes the attachment of isoleucine to tRNA(Ile). As IleRS can inadvertently accommodate and process structurally similar amino acids such as valine, to avoid such errors it has two additional distinct tRNA(Ile)-dependent editing activities. One activity is designated as 'pretransfer' editing and involves the hydrolysis of activated Val-AMP. The other activity is designated 'posttransfer' editing and involves deacylation of mischarged Val-tRNA(Ile). This Wigglesworthia glossinidia brevipalpis protein is Isoleucine--tRNA ligase.